The chain runs to 396 residues: Actin-related protein 6 (396 aa).

N-acetylthreonine is present on Thr-2. An N6-acetyllysine modification is found at Lys-260.

The protein belongs to the actin family. ARP6 subfamily. Component of the chromatin-remodeling SRCAP complex composed of at least SRCAP, DMAP1, RUVBL1, RUVBL2, ACTL6A, YEATS4, ACTR6 and ZNHIT1. Interacts with CBX1, CBX3 and CBX5.

It is found in the cytoplasm. Its subcellular location is the cytoskeleton. The protein localises to the nucleus. It localises to the nucleolus. Its function is as follows. Required for formation and/or maintenance of proper nucleolar structure and function. Plays a dual role in the regulation of ribosomal DNA (rDNA) transcription. In the presence of high glucose, maintains active rDNA transcription through H2A.Z deposition and under glucose starvation, is required for the repression of rDNA transcription, and this function may be independent of H2A.Z. This is Actin-related protein 6 (Actr6) from Mus musculus (Mouse).